A 357-amino-acid chain; its full sequence is MKNDYRTFKLSLLTLAPIHIGNGEKYTSREFIYENKKFYFPDMGKFYNKMVEKRLAEKFEAFLIQTRPNARNNRLISFLNDNRIAERSFGGYSISETGLESDRNPNSAGAINEVNKFIRDAFGNPYIPGSSLKGAIRTILMNTTPKWNNENAVNDFGRFPKENKNLIPWGPKKGKEYDDLFNAIRVSDSKPFDNKRLILVQKWDYSAKTNKAKPLPLYRESISPLTKIEFEITTTTDEAGRLIEELGKRAQAFYKDYKAFFLSEFPDDKIQANLQYPIYLGAGSGAWTKTLFKQADGILQRRYSRMKTKMVKKGVLKLTKAPLKIVKIPSGNHSLIKNHESFYEMGKANFMIKEIDK.

The protein belongs to the CRISPR-associated Csm5 family. Part of the Csm effector complex that includes at least Cas10(1), Csm2(3), Csm3(5), Csm4(1), Csm5(1) and mature crRNA. The Csm complex is elongated and slightly twisted with a maximal length of 215 Angstroms and a diameter of 75-80 Angstroms. It has been modeled to have a central protein filamant of Csm3 subunits along which the dsRNA helix of paired crRNA and target RNA binds. The filament is capped at one end by Cas10 and Csm4 and at the other end by Csm5; ssDNA is thought to bind to the N-terminal HD domain of Cas10. Csm with a precursor crRNA does not include Csm5, while Cas6, the enzyme probably involved in pre-crRNA processing, is found associated with a subset of the Csm complex.

Functionally, CRISPR (clustered regularly interspaced short palindromic repeat) is an adaptive immune system that provides protection against mobile genetic elements (viruses, transposable elements and conjugative plasmids). CRISPR clusters contain spacers, sequences complementary to antecedent mobile elements, and target invading nucleic acids. CRISPR clusters are transcribed and processed into CRISPR RNA (crRNA). The type III-A Csm effector complex binds crRNA and acts as a crRNA-guided RNase, DNase and cyclic oligoadenylate synthase; binding of target RNA cognate to the crRNA is required for all activities. In a heterologous host this Csm effector complex restricts ssRNA phage MS2, suggesting it may target RNA viruses in vivo. Csm functions as a non-specific ssDNase. Base-pairing between crRNA and target RNA to form a ternary Csm complex activates a ssDNase activity; target RNA cleavage suppresses the ssDNase, a temporal control that prevents uncontrolled DNA degradation. Viral RNA transcripts probably tether the Csm complex to the viral genome, recruiting Cas10 ssDNA activity which is able to degrade DNA in the transcription bubble, spatially controlling the DNase activity. In terms of biological role, this subunit might be involved in maturation of a crRNA intermediate to its mature form. This is CRISPR system Cms protein Csm5 from Streptococcus thermophilus.